We begin with the raw amino-acid sequence, 331 residues long: Biotin synthase (331 aa).

In terms of domain architecture, Radical SAM core spans 43–267 (NTVQVSTLLS…LMPASYVRLS (225 aa)). 3 residues coordinate [4Fe-4S] cluster: cysteine 58, cysteine 62, and cysteine 65. The [2Fe-2S] cluster site is built by cysteine 102, cysteine 133, cysteine 193, and arginine 265.

It belongs to the radical SAM superfamily. Biotin synthase family. Homodimer. The cofactor is [4Fe-4S] cluster. [2Fe-2S] cluster serves as cofactor.

It carries out the reaction (4R,5S)-dethiobiotin + (sulfur carrier)-SH + 2 reduced [2Fe-2S]-[ferredoxin] + 2 S-adenosyl-L-methionine = (sulfur carrier)-H + biotin + 2 5'-deoxyadenosine + 2 L-methionine + 2 oxidized [2Fe-2S]-[ferredoxin]. It functions in the pathway cofactor biosynthesis; biotin biosynthesis; biotin from 7,8-diaminononanoate: step 2/2. Functionally, catalyzes the conversion of dethiobiotin (DTB) to biotin by the insertion of a sulfur atom into dethiobiotin via a radical-based mechanism. This is Biotin synthase from Alkalilimnicola ehrlichii (strain ATCC BAA-1101 / DSM 17681 / MLHE-1).